Consider the following 438-residue polypeptide: Phosphatidylserine decarboxylase proenzyme 1, mitochondrial (438 aa).

The transit peptide at Met-1–Pro-21 directs the protein to the mitochondrion. At Cys-22–Pro-48 the chain is on the mitochondrial matrix side. The chain crosses the membrane as a helical span at residues Gly-49 to Tyr-67. Residues Glu-68 to Glu-438 are Mitochondrial intermembrane-facing. Active-site charge relay system; for autoendoproteolytic cleavage activity residues include Asp-173, His-273, and Ser-387. The Schiff-base intermediate with substrate; via pyruvic acid; for decarboxylase activity role is filled by Ser-387. Ser-387 bears the Pyruvic acid (Ser); by autocatalysis mark.

This sequence belongs to the phosphatidylserine decarboxylase family. PSD-B subfamily. Eukaryotic type I sub-subfamily. In terms of assembly, heterodimer of a large membrane-associated beta subunit and a small pyruvoyl-containing alpha subunit. The cofactor is pyruvate. Post-translationally, is synthesized initially as an inactive proenzyme. Formation of the active enzyme involves a self-maturation process in which the active site pyruvoyl group is generated from an internal serine residue via an autocatalytic post-translational modification. Two non-identical subunits are generated from the proenzyme in this reaction, and the pyruvate is formed at the N-terminus of the alpha chain, which is derived from the carboxyl end of the proenzyme. The autoendoproteolytic cleavage occurs by a canonical serine protease mechanism, in which the side chain hydroxyl group of the serine supplies its oxygen atom to form the C-terminus of the beta chain, while the remainder of the serine residue undergoes an oxidative deamination to produce ammonia and the pyruvoyl prosthetic group on the alpha chain. During this reaction, the Ser that is part of the protease active site of the proenzyme becomes the pyruvoyl prosthetic group, which constitutes an essential element of the active site of the mature decarboxylase.

It localises to the mitochondrion inner membrane. It carries out the reaction a 1,2-diacyl-sn-glycero-3-phospho-L-serine + H(+) = a 1,2-diacyl-sn-glycero-3-phosphoethanolamine + CO2. The protein operates within phospholipid metabolism; phosphatidylethanolamine biosynthesis; phosphatidylethanolamine from CDP-diacylglycerol: step 2/2. Functionally, catalyzes the formation of phosphatidylethanolamine (PtdEtn) from phosphatidylserine (PtdSer). Plays a central role in phospholipid metabolism and in the interorganelle trafficking of phosphatidylserine. The chain is Phosphatidylserine decarboxylase proenzyme 1, mitochondrial (PSD1) from Oryza sativa subsp. japonica (Rice).